A 153-amino-acid chain; its full sequence is Lipoprotein signal peptidase (153 aa).

2 consecutive transmembrane segments (helical) span residues 61–81 (YFFVILTVLVIGAALFYLVKN) and 85–105 (SLWLVLSLILIISGGIGNFID). Residues Asp-114 and Asp-130 contribute to the active site. Residues 125-145 (IFNVADSYLTVGVLLLILILW) traverse the membrane as a helical segment.

Belongs to the peptidase A8 family.

It is found in the cell membrane. The catalysed reaction is Release of signal peptides from bacterial membrane prolipoproteins. Hydrolyzes -Xaa-Yaa-Zaa-|-(S,diacylglyceryl)Cys-, in which Xaa is hydrophobic (preferably Leu), and Yaa (Ala or Ser) and Zaa (Gly or Ala) have small, neutral side chains.. It participates in protein modification; lipoprotein biosynthesis (signal peptide cleavage). Its function is as follows. This protein specifically catalyzes the removal of signal peptides from prolipoproteins. The polypeptide is Lipoprotein signal peptidase (Streptococcus thermophilus (strain CNRZ 1066)).